Here is a 947-residue protein sequence, read N- to C-terminus: Bifunctional glutamine synthetase adenylyltransferase/adenylyl-removing enzyme (947 aa).

Residues 1 to 440 form an adenylyl removase region; that stretch reads MTPLSSPLSQ…VFNELIGDDE (440 aa). The interval 450 to 947 is adenylyl transferase; it reads SEPWREVWQD…ASWRKWLVAV (498 aa).

The protein belongs to the GlnE family. It depends on Mg(2+) as a cofactor.

It catalyses the reaction [glutamine synthetase]-O(4)-(5'-adenylyl)-L-tyrosine + phosphate = [glutamine synthetase]-L-tyrosine + ADP. The catalysed reaction is [glutamine synthetase]-L-tyrosine + ATP = [glutamine synthetase]-O(4)-(5'-adenylyl)-L-tyrosine + diphosphate. Functionally, involved in the regulation of glutamine synthetase GlnA, a key enzyme in the process to assimilate ammonia. When cellular nitrogen levels are high, the C-terminal adenylyl transferase (AT) inactivates GlnA by covalent transfer of an adenylyl group from ATP to specific tyrosine residue of GlnA, thus reducing its activity. Conversely, when nitrogen levels are low, the N-terminal adenylyl removase (AR) activates GlnA by removing the adenylyl group by phosphorolysis, increasing its activity. The regulatory region of GlnE binds the signal transduction protein PII (GlnB) which indicates the nitrogen status of the cell. This is Bifunctional glutamine synthetase adenylyltransferase/adenylyl-removing enzyme from Salmonella paratyphi A (strain ATCC 9150 / SARB42).